The sequence spans 108 residues: Large ribosomal subunit protein uL24 (108 aa).

The protein belongs to the universal ribosomal protein uL24 family. As to quaternary structure, part of the 50S ribosomal subunit.

In terms of biological role, one of two assembly initiator proteins, it binds directly to the 5'-end of the 23S rRNA, where it nucleates assembly of the 50S subunit. Its function is as follows. One of the proteins that surrounds the polypeptide exit tunnel on the outside of the subunit. The sequence is that of Large ribosomal subunit protein uL24 from Frankia casuarinae (strain DSM 45818 / CECT 9043 / HFP020203 / CcI3).